The following is a 234-amino-acid chain: MKTNILTIIILSCVFSYGSQLAYADENLKDLKRSLRFAYNITPCDYENVEIAFVTTNSIHINTKQKRSECILYVDSIVSLGITDQFIKGDKVDVFGLPYNFSPPYVDNIYGGIVKHSNQGNKSLQFVGILNQDGKETYLPSEVVRIKKKQFTLQEFDLKIRKFLMEKYNIYDSESRYTSGSLFLATKDSKHYEVDLFNKDDKLLSRDSFFKRYKDNKIFNSEEISHFDIYLKTY.

An N-terminal signal peptide occupies residues 1 to 24 (MKTNILTIIILSCVFSYGSQLAYA).

It belongs to the staphylococcal/streptococcal toxin family.

Functionally, mitogenic for human peripheral blood lymphocytes. This is Exotoxin type G (speG) from Streptococcus pyogenes serotype M3 (strain ATCC BAA-595 / MGAS315).